Consider the following 323-residue polypeptide: MTNIVVSYILNPLIYMVPVLLAVAFLTLIERKVLGYMQLRKGPNIVGPYGLLQPIADGVKLFIKEPIRPSTSSPSLFVLPVLALTLALTLWAPMPMPFPVADLNLSILFVLALSSLAVYSILGSGWASNSKYALVGALRAVAQTISYEVSLGLILLSVIIFSGGFTLQTFSTTQEATWLALPAWPLAAMWYISTLEETNRAPFDLTEGESELVSGFNVEYAGGPFALFFLAEYANILLMNTLSAVLFLGSSYSTTMPEFTSLTLMTKAALLSMVFLWVRASYPRFRYDQLMHLVWKNFLPLTLALVIWHLSLSTACAGLPPHA.

8 helical membrane passes run 9–29, 76–96, 107–127, 145–165, 175–195, 227–247, 258–278, and 298–318; these read ILNPLIYMVPVLLAVAFLTLI, LFVLPVLALTLALTLWAPMPM, ILFVLALSSLAVYSILGSGWA, ISYEVSLGLILLSVIIFSGGF, EATWLALPAWPLAAMWYISTL, LFFLAEYANILLMNTLSAVLF, EFTSLTLMTKAALLSMVFLWV, and FLPLTLALVIWHLSLSTACAG.

This sequence belongs to the complex I subunit 1 family.

It localises to the mitochondrion inner membrane. The catalysed reaction is a ubiquinone + NADH + 5 H(+)(in) = a ubiquinol + NAD(+) + 4 H(+)(out). Functionally, core subunit of the mitochondrial membrane respiratory chain NADH dehydrogenase (Complex I) that is believed to belong to the minimal assembly required for catalysis. Complex I functions in the transfer of electrons from NADH to the respiratory chain. The immediate electron acceptor for the enzyme is believed to be ubiquinone. The chain is NADH-ubiquinone oxidoreductase chain 1 (MT-ND1) from Gadus morhua (Atlantic cod).